Here is a 117-residue protein sequence, read N- to C-terminus: Large ribosomal subunit protein bL19 (117 aa).

This sequence belongs to the bacterial ribosomal protein bL19 family.

Its function is as follows. This protein is located at the 30S-50S ribosomal subunit interface and may play a role in the structure and function of the aminoacyl-tRNA binding site. The polypeptide is Large ribosomal subunit protein bL19 (Thioalkalivibrio sulfidiphilus (strain HL-EbGR7)).